Here is a 282-residue protein sequence, read N- to C-terminus: MASLGQILFWSIISIIIILAGAIALIIGFGISGRHSITVTTVASAGNIGEDGILSCTFEPDIKLSDIVIQWLKEGVLGLVHEFKEGKDELSEQDEMFRGRTAVFADQVIVGNASLRLKNVQLTDAGTYKCYIITSKGKGNANLEYKTGAFSMPEVNVDYNASSETLRCEAPRWFPQPTVVWASQVDQGANFSEVSNTSFELNSENVTMKVVSVLYNVTINNTYSCMIENDIAKATGDIKVTESEIKRRSHLQLLNSKASLCVSSFFAISWALLPLSPYLMLK.

The N-terminal stretch at 1–24 (MASLGQILFWSIISIIIILAGAIA) is a signal peptide. The Extracellular segment spans residues 25–259 (LIIGFGISGR…HLQLLNSKAS (235 aa)). Ig-like V-type domains follow at residues 35 to 146 (HSIT…LEYK) and 153 to 241 (PEVN…IKVT). 2 cysteine pairs are disulfide-bonded: C56–C130 and C168–C225. N-linked (GlcNAc...) asparagine glycosylation occurs at N216. A helical transmembrane segment spans residues 260 to 280 (LCVSSFFAISWALLPLSPYLM). Topologically, residues 281 to 282 (LK) are cytoplasmic.

It belongs to the immunoglobulin superfamily. BTN/MOG family. In terms of processing, N-glycosylated. In terms of tissue distribution, overexpressed in breast, ovarian, endometrial, renal cell (RCC) and non-small-cell lung cancers (NSCLC). Expressed on activated T- and B-cells, monocytes and dendritic cells, but not expressed in most normal tissues (at protein level). Widely expressed, including in kidney, liver, lung, ovary, placenta, spleen and testis.

It is found in the cell membrane. In terms of biological role, negatively regulates T-cell-mediated immune response by inhibiting T-cell activation, proliferation, cytokine production and development of cytotoxicity. When expressed on the cell surface of tumor macrophages, plays an important role, together with regulatory T-cells (Treg), in the suppression of tumor-associated antigen-specific T-cell immunity. Involved in promoting epithelial cell transformation. This Homo sapiens (Human) protein is V-set domain-containing T-cell activation inhibitor 1.